Consider the following 228-residue polypeptide: Octanoyltransferase (228 aa).

One can recognise a BPL/LPL catalytic domain in the interval 40–225 (GEEAERVWLV…SFERVFDAAP (186 aa)). Residues 79 to 86 (RGGQWTYH), 156 to 158 (AIG), and 169 to 171 (GIA) each bind substrate. Residue C187 is the Acyl-thioester intermediate of the active site.

This sequence belongs to the LipB family.

Its subcellular location is the cytoplasm. The enzyme catalyses octanoyl-[ACP] + L-lysyl-[protein] = N(6)-octanoyl-L-lysyl-[protein] + holo-[ACP] + H(+). The protein operates within protein modification; protein lipoylation via endogenous pathway; protein N(6)-(lipoyl)lysine from octanoyl-[acyl-carrier-protein]: step 1/2. Catalyzes the transfer of endogenously produced octanoic acid from octanoyl-acyl-carrier-protein onto the lipoyl domains of lipoate-dependent enzymes. Lipoyl-ACP can also act as a substrate although octanoyl-ACP is likely to be the physiological substrate. In Acidiphilium cryptum (strain JF-5), this protein is Octanoyltransferase.